Here is a 406-residue protein sequence, read N- to C-terminus: Bifunctional protein GlmU (406 aa).

Residues 1–221 (MFIILAAGHG…EEEATGINSR (221 aa)) are pyrophosphorylase. Residues 5–8 (LAAG), Lys-19, Gln-68, 73–74 (GT), 98–100 (YGD), Gly-134, Glu-148, Asn-162, and Asn-219 each bind UDP-N-acetyl-alpha-D-glucosamine. Asp-100 contacts Mg(2+). Asn-219 lines the Mg(2+) pocket. The tract at residues 222–242 (NDLAKAEFYFQENRRKFFTDS) is linker. The interval 243 to 406 (GVTLVAPETV…RRKQMVKKIK (164 aa)) is N-acetyltransferase. Position 308 (Lys-308) interacts with UDP-N-acetyl-alpha-D-glucosamine. His-320 (proton acceptor) is an active-site residue. 2 residues coordinate UDP-N-acetyl-alpha-D-glucosamine: Tyr-323 and Asn-334. Acetyl-CoA-binding positions include Ala-337, 343–344 (NY), Ala-380, and Arg-397.

The protein in the N-terminal section; belongs to the N-acetylglucosamine-1-phosphate uridyltransferase family. It in the C-terminal section; belongs to the transferase hexapeptide repeat family. Homotrimer. It depends on Mg(2+) as a cofactor.

Its subcellular location is the cytoplasm. The catalysed reaction is alpha-D-glucosamine 1-phosphate + acetyl-CoA = N-acetyl-alpha-D-glucosamine 1-phosphate + CoA + H(+). It catalyses the reaction N-acetyl-alpha-D-glucosamine 1-phosphate + UTP + H(+) = UDP-N-acetyl-alpha-D-glucosamine + diphosphate. It functions in the pathway nucleotide-sugar biosynthesis; UDP-N-acetyl-alpha-D-glucosamine biosynthesis; N-acetyl-alpha-D-glucosamine 1-phosphate from alpha-D-glucosamine 6-phosphate (route II): step 2/2. Its pathway is nucleotide-sugar biosynthesis; UDP-N-acetyl-alpha-D-glucosamine biosynthesis; UDP-N-acetyl-alpha-D-glucosamine from N-acetyl-alpha-D-glucosamine 1-phosphate: step 1/1. It participates in bacterial outer membrane biogenesis; LPS lipid A biosynthesis. Functionally, catalyzes the last two sequential reactions in the de novo biosynthetic pathway for UDP-N-acetylglucosamine (UDP-GlcNAc). The C-terminal domain catalyzes the transfer of acetyl group from acetyl coenzyme A to glucosamine-1-phosphate (GlcN-1-P) to produce N-acetylglucosamine-1-phosphate (GlcNAc-1-P), which is converted into UDP-GlcNAc by the transfer of uridine 5-monophosphate (from uridine 5-triphosphate), a reaction catalyzed by the N-terminal domain. This Wolbachia sp. subsp. Brugia malayi (strain TRS) protein is Bifunctional protein GlmU.